A 504-amino-acid polypeptide reads, in one-letter code: MSEIVDTELLVNCTILAVRRFELNSIVNTTLLGSLNRTEVVSLLSSIIDNRDNLESINEAKDFLTECLFPSPTRPYELPWEQKTIWAIIFGLMMFVAIAGNGIVLWIVTGHRSMRTVTNYFLLNLSIADLLMSSLNCVFNFIFMLNSDWPFGSIYCTINNFVANVTVSTSVFTLVAISFDRYIAIVHPLKRRTSRRKVRIILVLIWALSCVLSAPCLLYSSIMTKHYYNGKSRTVCFMMWPDGRYPTSMADYAYNLIILVLTYGIPMIVMLICYSLMGRVLWGSRSIGENTDRQMESMKSKRKVVRMFIAIVSIFAICWLPYHLFFIYAYHNNQVASTKYVQHMYLGFYWLAMSNAMVNPLIYYWMNKRFRMYFQRIICCCCVGLTRHRFDSPKSRLTNKNSSNRHTRAETKSQWKRSTMETQIQQAPVTSSCREQRSAQQQQPPGSGTNRAAVECIMERPADGSSSPLCLSINNSIGERQRVKIKYISCDEDNNPVELSPKQM.

Over 1 to 84 the chain is Extracellular; that stretch reads MSEIVDTELL…PYELPWEQKT (84 aa). Residues Asn-12, Asn-28, and Asn-36 are each glycosylated (N-linked (GlcNAc...) asparagine). The chain crosses the membrane as a helical span at residues 85-108; that stretch reads IWAIIFGLMMFVAIAGNGIVLWIV. The Cytoplasmic portion of the chain corresponds to 109 to 118; the sequence is TGHRSMRTVT. Residues 119–143 traverse the membrane as a helical segment; it reads NYFLLNLSIADLLMSSLNCVFNFIF. At 144 to 155 the chain is on the extracellular side; it reads MLNSDWPFGSIY. The helical transmembrane segment at 156-179 threads the bilayer; that stretch reads CTINNFVANVTVSTSVFTLVAISF. At 180–199 the chain is on the cytoplasmic side; that stretch reads DRYIAIVHPLKRRTSRRKVR. Residues 200 to 224 form a helical membrane-spanning segment; that stretch reads IILVLIWALSCVLSAPCLLYSSIMT. Over 225–250 the chain is Extracellular; the sequence is KHYYNGKSRTVCFMMWPDGRYPTSMA. The helical transmembrane segment at 251-275 threads the bilayer; it reads DYAYNLIILVLTYGIPMIVMLICYS. Topologically, residues 276–308 are cytoplasmic; sequence LMGRVLWGSRSIGENTDRQMESMKSKRKVVRMF. A helical membrane pass occupies residues 309 to 330; the sequence is IAIVSIFAICWLPYHLFFIYAY. The Extracellular portion of the chain corresponds to 331 to 343; the sequence is HNNQVASTKYVQH. Residues 344-367 form a helical membrane-spanning segment; it reads MYLGFYWLAMSNAMVNPLIYYWMN. The Cytoplasmic segment spans residues 368–504; sequence KRFRMYFQRI…NPVELSPKQM (137 aa). Positions 393–450 are disordered; the sequence is PKSRLTNKNSSNRHTRAETKSQWKRSTMETQIQQAPVTSSCREQRSAQQQQPPGSGTN. 2 stretches are compositionally biased toward polar residues: residues 395 to 404 and 416 to 450; these read SRLTNKNSSN and KRST…SGTN.

This sequence belongs to the G-protein coupled receptor 1 family. In terms of tissue distribution, expressed in central nervous system, as well as in subsets of neurons in each segment of the developing ventral ganglia.

The protein localises to the cell membrane. Its function is as follows. Receptor for tachykinin-like peptides. This is Tachykinin-like peptides receptor 86C (TkR86C) from Drosophila melanogaster (Fruit fly).